The primary structure comprises 215 residues: Interleukin-12 subunit alpha (215 aa).

A signal peptide spans 1-22 (MCQSRYLLFLATLVLLNHLTSA). 3 disulfides stabilise this stretch: Cys-33–Cys-106, Cys-60–Cys-192, and Cys-81–Cys-119. 3 N-linked (GlcNAc...) asparagine glycosylation sites follow: Asn-35, Asn-89, and Asn-167.

It belongs to the IL-6 superfamily. In terms of assembly, heterodimer with IL12B; disulfide-linked. This heterodimer is known as interleukin IL-12. Heterodimer with EBI3/IL27B; not disulfide-linked. This heterodimer is known as interleukin IL-35. Interacts with NBR1; this interaction promotes IL-12 secretion.

It localises to the secreted. Heterodimerizes with IL12B to form the IL-12 cytokine or with EBI3/IL27B to form the IL-35 cytokine. IL-12 is primarily produced by professional antigen-presenting cells (APCs) such as B-cells and dendritic cells (DCs) as well as macrophages and granulocytes and regulates T-cell and natural killer-cell responses, induces the production of interferon-gamma (IFN-gamma), favors the differentiation of T-helper 1 (Th1) cells and is an important link between innate resistance and adaptive immunity. Mechanistically, exerts its biological effects through a receptor composed of IL12R1 and IL12R2 subunits. Binding to the receptor results in the rapid tyrosine phosphorylation of a number of cellular substrates including the JAK family kinases TYK2 and JAK2. In turn, recruited STAT4 gets phosphorylated and translocates to the nucleus where it regulates cytokine/growth factor responsive genes. As part of IL-35, plays essential roles in maintaining the immune homeostasis of the liver microenvironment and also functions as an immune-suppressive cytokine. Mediates biological events through unconventional receptors composed of IL12RB2 and gp130/IL6ST heterodimers or homodimers. Signaling requires the transcription factors STAT1 and STAT4, which form a unique heterodimer that binds to distinct DNA sites. This chain is Interleukin-12 subunit alpha (Il12a), found in Rattus norvegicus (Rat).